A 510-amino-acid chain; its full sequence is Kynurenine 3-monooxygenase (510 aa).

It belongs to the aromatic-ring hydroxylase family. KMO subfamily. The cofactor is FAD.

The protein resides in the mitochondrion outer membrane. The enzyme catalyses L-kynurenine + NADPH + O2 + H(+) = 3-hydroxy-L-kynurenine + NADP(+) + H2O. It participates in cofactor biosynthesis; NAD(+) biosynthesis; quinolinate from L-kynurenine: step 1/3. Catalyzes the hydroxylation of L-kynurenine (L-Kyn) to form 3-hydroxy-L-kynurenine (L-3OHKyn). Required for synthesis of quinolinic acid. The polypeptide is Kynurenine 3-monooxygenase (bna4) (Aspergillus oryzae (strain ATCC 42149 / RIB 40) (Yellow koji mold)).